The chain runs to 270 residues: uncharacterized protein (270 aa).

The N-terminal stretch at 1–23 is a signal peptide; sequence MFNFITFILFAVVCISYCHKSRG. N-linked (GlcNAc...) asparagine glycosylation is found at Asn246 and Asn252.

It localises to the secreted. This is an uncharacterized protein from Caenorhabditis elegans.